The sequence spans 144 residues: Large ribosomal subunit protein uL15 (144 aa).

The segment at 1–53 is disordered; that stretch reads MRLNTLSPAEGAKHAPKRVGRGIGSGLGKTGGRGHKGQKSRSGGGVRRGFEGG. Residues 21 to 31 are compositionally biased toward gly residues; the sequence is RGIGSGLGKTG.

The protein belongs to the universal ribosomal protein uL15 family. In terms of assembly, part of the 50S ribosomal subunit.

In terms of biological role, binds to the 23S rRNA. The chain is Large ribosomal subunit protein uL15 from Proteus mirabilis (strain HI4320).